The following is a 452-amino-acid chain: Netrin-5 (452 aa).

Residues 1–34 form the signal peptide; sequence MTDYRTLFSSPGAGSTVTTPITLSLLLLLSQATS. Cystine bridges form between cysteine 173-cysteine 182, cysteine 175-cysteine 191, cysteine 193-cysteine 202, cysteine 205-cysteine 225, cysteine 228-cysteine 240, cysteine 230-cysteine 247, cysteine 249-cysteine 258, cysteine 261-cysteine 275, cysteine 298-cysteine 376, cysteine 302-cysteine 378, and cysteine 317-cysteine 438. Laminin EGF-like domains lie at 173–227 and 228–277; these read CQCH…PCLP and CQCH…PCQR. One can recognise an NTR domain in the interval 298-438; the sequence is CQGYCNVSVS…LQQKERGGAC (141 aa). Asparagine 303 is a glycosylation site (N-linked (GlcNAc...) asparagine).

It localises to the secreted. Its function is as follows. Plays a role in neurogenesis. Prevents motor neuron cell body migration out of the neural tube. This is Netrin-5 (Ntn5) from Mus musculus (Mouse).